Consider the following 76-residue polypeptide: MAKIVRIKGEIVGKDEPMVFTKEYNVLKENDALETMYSEIGSKHAVKRANIKVVEISEISVEEIQSPILKKTLEMN.

The protein belongs to the eukaryotic ribosomal protein eL20 family. As to quaternary structure, part of the 50S ribosomal subunit. Binds 23S rRNA.

In Methanococcus maripaludis (strain DSM 14266 / JCM 13030 / NBRC 101832 / S2 / LL), this protein is Large ribosomal subunit protein eL20.